A 418-amino-acid polypeptide reads, in one-letter code: Glutamyl-tRNA reductase (418 aa).

Substrate contacts are provided by residues 49-52 (TCNR), Ser-109, 114-116 (EPQ), and Gln-120. Cys-50 serves as the catalytic Nucleophile. 189–194 (GAGETI) serves as a coordination point for NADP(+).

The protein belongs to the glutamyl-tRNA reductase family. Homodimer.

The catalysed reaction is (S)-4-amino-5-oxopentanoate + tRNA(Glu) + NADP(+) = L-glutamyl-tRNA(Glu) + NADPH + H(+). The protein operates within porphyrin-containing compound metabolism; protoporphyrin-IX biosynthesis; 5-aminolevulinate from L-glutamyl-tRNA(Glu): step 1/2. Its function is as follows. Catalyzes the NADPH-dependent reduction of glutamyl-tRNA(Glu) to glutamate 1-semialdehyde (GSA). The chain is Glutamyl-tRNA reductase from Klebsiella pneumoniae subsp. pneumoniae (strain ATCC 700721 / MGH 78578).